A 196-amino-acid chain; its full sequence is Small heat shock protein C3 (196 aa).

The sHSP domain maps to Ser-88–Gln-196.

This sequence belongs to the small heat shock protein (HSP20) family.

This chain is Small heat shock protein C3 (hspc3-1), found in Rickettsia felis (strain ATCC VR-1525 / URRWXCal2) (Rickettsia azadi).